The sequence spans 2530 residues: Cullin-9 (2530 aa).

Lys87 participates in a covalent cross-link: Glycyl lysine isopeptide (Lys-Gly) (interchain with G-Cter in ubiquitin). The CPH domain maps to 367–440 (RSEFSSRSGY…HWHMLEILGP (74 aa)). Disordered regions lie at residues 585 to 639 (LPSS…KAQS) and 930 to 951 (RGSP…GSPE). Residues 940–949 (TPSTQGQDGS) are compositionally biased toward polar residues. Position 978 is a phosphoserine (Ser978). The DOC domain occupies 1145–1324 (PITIPFFDVF…RTCLFYTIRA (180 aa)). 1365 to 1372 (AAQALGKT) serves as a coordination point for ATP. Disordered stretches follow at residues 1435 to 1468 (EAPP…TPVC) and 1667 to 1690 (GDQE…GREL). Ser1459 carries the phosphoserine modification. Residue Lys1884 forms a Glycyl lysine isopeptide (Lys-Gly) (interchain with G-Cter in NEDD8) linkage. The TRIAD supradomain stretch occupies residues 2070–2287 (RPDQCPVCVT…KDYYNCSAMV (218 aa)). Positions 2074, 2077, 2092, 2094, 2097, 2100, 2119, 2124, 2164, 2170, 2185, 2188, 2193, 2196, 2202, 2207, 2240, and 2243 each coordinate Zn(2+). Residues 2074-2124 (CPVCVTPLGPHDDSPSLCCLHCCCKSCWNEYLTTRIEQNFVLNCTCPIADC) form an RING-type 1 zinc finger. Residues 2144 to 2207 (SKYEKALLRG…FPEAHYPASC (64 aa)) form an IBR-type zinc finger. The RING-type 2; atypical zinc finger occupies 2240-2269 (CPSCQAPIEKNEGCLHMTCARCNHGFCWRC). The active site involves Cys2253. Cys2258, Cys2261, Cys2266, Cys2269, His2277, and Cys2283 together coordinate Zn(2+). Ser2440 carries the phosphoserine modification. The tract at residues 2443–2530 (VETREVKGSN…DEDEDDESYD (88 aa)) is disordered. Positions 2452–2462 (NVPSDQPQGSS) are enriched in polar residues. Residues 2459–2500 (QGSSGLEVEDEEEEEEEEEEEEEEEEEDVPEWQHEFDEELDN) are a coiled coil. 2 stretches are compositionally biased toward acidic residues: residues 2465–2510 (EVED…EESE) and 2520–2530 (GDEDEDDESYD).

This sequence belongs to the cullin family. In terms of assembly, component of a Cul9-RING complex consisting of CUL9 and RBX1; the CUL9-RBX1 complex is a heterododecamer composed of six CUL9 and six RBX1 protomers. Interacts (via C-terminal TRIAD/RBR supradomain) with E2 ubiquitin-conjugating enzyme UBE2L3. Interacts with CUL7; the interaction with the CUL7 component of the 3M complex leads to inhibition of CUL9 activity. The CUL7-CUL9 heterodimer seems to interact specifically with TP53, likely via the CPH domain. Forms a complex with p53/TP53 in the cytoplasm of unstressed cells. Interacts with UBCH7 and UBCH8. In terms of processing, autoubiquitinated by the CUL9-RBX1 complex at Lys-87. Post-translationally, neddylated. Neddylation is mediated by E1 enzyme UBA3-NAE1 complex and E2 enzyme UBE2F. Structural rearrangment of the C-terminal TRIAD/RBR supradomain may play a role in neddylation and deneddylation.

The protein resides in the cytoplasm. Core component of the Cul9-RING ubiquitin-protein ligase complex composed of CUL9 and RBX1. The CUL9-RBX1 complex mediates ubiquitination and subsequent degradation of BIRC5 and is required to maintain microtubule dynamics and genome integrity. Acts downstream of the 3M complex, which inhibits CUL9 activity and the ubiquitination of BIRC5. The CUL9-RBX1 complex also mediates mono-ubiquitination of p53/TP53. Acts as a cytoplasmic anchor protein in p53/TP53-associated protein complex. Regulates the subcellular localization of p53/TP53 and its subsequent function. Ubiquitinates apurinic/apyrimidinic endodeoxyribonuclease APEX2. Ubiquitination by the CUL9-RBX1 complex is predominantly mediated by E2 ubiquitin-conjugating enzymes UBE2L3 and UBE2D2. The polypeptide is Cullin-9 (Cul9) (Mus musculus (Mouse)).